A 567-amino-acid polypeptide reads, in one-letter code: 2-succinyl-5-enolpyruvyl-6-hydroxy-3-cyclohexene-1-carboxylate synthase (567 aa).

This sequence belongs to the TPP enzyme family. MenD subfamily. As to quaternary structure, homodimer. Mg(2+) serves as cofactor. It depends on Mn(2+) as a cofactor. Thiamine diphosphate is required as a cofactor.

It catalyses the reaction isochorismate + 2-oxoglutarate + H(+) = 5-enolpyruvoyl-6-hydroxy-2-succinyl-cyclohex-3-ene-1-carboxylate + CO2. Its pathway is quinol/quinone metabolism; 1,4-dihydroxy-2-naphthoate biosynthesis; 1,4-dihydroxy-2-naphthoate from chorismate: step 2/7. It participates in quinol/quinone metabolism; menaquinone biosynthesis. In terms of biological role, catalyzes the thiamine diphosphate-dependent decarboxylation of 2-oxoglutarate and the subsequent addition of the resulting succinic semialdehyde-thiamine pyrophosphate anion to isochorismate to yield 2-succinyl-5-enolpyruvyl-6-hydroxy-3-cyclohexene-1-carboxylate (SEPHCHC). In Shewanella loihica (strain ATCC BAA-1088 / PV-4), this protein is 2-succinyl-5-enolpyruvyl-6-hydroxy-3-cyclohexene-1-carboxylate synthase.